Consider the following 161-residue polypeptide: MAKAIVLLSALCILALANFAHCRPEVFDVEGKVYCDTCRVQFETKLSENLEGATVKLQCRNISTEAETFSVEGVTDKDGKYKLTVNGDHENDICEVTVVKSPREDCKESVSGYEKARIECSDNVGIHNAVRFANPLFFMKAESVQGCKEALDELGLFPLEF.

Positions 1–17 (MAKAIVLLSALCILALA) are cleaved as a signal peptide. 3 cysteine pairs are disulfide-bonded: Cys-35–Cys-106, Cys-38–Cys-147, and Cys-59–Cys-94. Asn-61 carries N-linked (GlcNAc...) asparagine glycosylation.

The protein belongs to the Ole e I family. Expressed in anthers and pollen.

May play a role during germination or early tube growth. This Solanum lycopersicum (Tomato) protein is Anther-specific protein LAT52 (LAT52).